A 282-amino-acid polypeptide reads, in one-letter code: Complement component 1 Q subcomponent-binding protein, mitochondrial (282 aa).

A mitochondrion-targeting transit peptide spans 1 to 70; that stretch reads MLPLLRCVPR…PRGPCACGCG (70 aa). Positions 76 to 93 are C1q binding; that stretch reads TEGDKAFVDFLNDEIKEE. N6-acetyllysine is present on K91. Residues 137-163 form a disordered region; it reads NSIPPTFDGEEEPTQGQKVEEQEPELT. Residues 168-213 form an interaction with MAVS region; sequence FVVEVIKNDDGKKALVLDCHYPEDEVGQEDEAESDIFSIREVSFQS. A Phosphotyrosine modification is found at Y188. Phosphoserine occurs at positions 201 and 205.

The protein belongs to the MAM33 family. In terms of assembly, homotrimer; three monomers form a donut-shaped structure with an unusually asymmetric charge distribution on the surface. Interacts with CDK13, HRK, VTN, NFYB, ADRA1B, FOXC1, DDX21, DDX50, NCL, SRSF1 and SRSF9. Interacts with CD93; the association may represent a cell surface C1q receptor. Interacts with KRT1; the association represents a cell surface kininogen receptor. Interacts with CD209; the interaction is indicative for a C1q:C1QBP:CD209 signaling complex. Interacts with FBL and RRP1; the respective interactions with C1QBP are competitive. Probably associates with the mitoribosome. Interacts with MAVS; the interaction occurs upon viral transfection. Interacts with PPIF. Interacts with U2AF1L4. Interacts with PLEKHN1. Interacts with VGF-derived peptide TLQP-21. Interacts with MRE11 and RAD50; forming the MRC (MRE11-RAD50-C1QBP) complex that inhibits the activity of MRE11. As to quaternary structure, (Microbial infection) Interacts with Rubella virus capsid protein; the interaction occurs in mitochondria. (Microbial infection) Interacts with L.monocytogenes InlB.

The protein resides in the mitochondrion matrix. It localises to the nucleus. Its subcellular location is the cell membrane. It is found in the secreted. The protein localises to the cytoplasm. The protein resides in the nucleolus. Multifunctional and multicompartmental protein involved in inflammation and infection processes, ribosome biogenesis, protein synthesis in mitochondria, regulation of apoptosis, transcriptional regulation and pre-mRNA splicing. At the cell surface is thought to act as an endothelial receptor for plasma proteins of the complement and kallikrein-kinin cascades. Putative receptor for C1q; specifically binds to the globular 'heads' of C1q thus inhibiting C1; may perform the receptor function through a complex with C1qR/CD93. In complex with cytokeratin-1/KRT1 is a high affinity receptor for kininogen-1/HMWK. Can also bind other plasma proteins, such as coagulation factor XII leading to its autoactivation. May function to bind initially fluid kininogen-1 to the cell membrane. The secreted form may enhance both extrinsic and intrinsic coagulation pathways. It is postulated that the cell surface form requires docking with transmembrane proteins for downstream signaling which might be specific for a cell-type or response. By acting as C1q receptor is involved in chemotaxis of immature dendritic cells and neutrophils and is proposed to signal through CD209/DC-SIGN on immature dendritic cells, through integrin alpha-4/beta-1 during trophoblast invasion of the decidua, and through integrin beta-1 during endothelial cell adhesion and spreading. Signaling involved in inhibition of innate immune response is implicating the PI3K-AKT/PKB pathway. Required for protein synthesis in mitochondria. In mitochondrial translation may be involved in formation of functional 55S mitoribosomes; the function seems to involve its RNA-binding activity. Acts as a RNA modification reader, which specifically recognizes and binds mitochondrial RNAs modified by C5-methylcytosine (m5C) in response to stress, and promotes recruitment of the mitochondrial degradosome complex, leading to their degradation. May be involved in the nucleolar ribosome maturation process; the function may involve the exchange of FBL for RRP1 in the association with pre-ribosome particles. Involved in regulation of RNA splicing by inhibiting the RNA-binding capacity of SRSF1 and its phosphorylation. Is required for the nuclear translocation of splicing factor U2AF1L4. Involved in regulation of CDKN2A- and HRK-mediated apoptosis. Stabilizes mitochondrial CDKN2A isoform smARF. May be involved in regulation of FOXC1 transcriptional activity and NFY/CCAAT-binding factor complex-mediated transcription. May play a role in antibacterial defense as it can bind to cell surface hyaluronan and inhibit Streptococcus pneumoniae hyaluronate lyase. May be involved in modulation of the immune response; ligation by HCV core protein is resulting in suppression of interleukin-12 production in monocyte-derived dendritic cells. Involved in regulation of antiviral response by inhibiting RIGI- and IFIH1-mediated signaling pathways probably involving its association with MAVS after viral infection. Acts as a regulator of DNA repair via homologous recombination by inhibiting the activity of MRE11: interacts with unphosphorylated MRE11 and RAD50 in absence of DNA damage, preventing formation and activity of the MRN complex. Following DNA damage, dissociates from phosphorylated MRE11, allowing formation of the MRN complex. In terms of biological role, (Microbial infection) During bacterial infection processes acts as an attachment site for microbial proteins, including Listeria monocytogenes internalin B (InlB). In Chlorocebus aethiops (Green monkey), this protein is Complement component 1 Q subcomponent-binding protein, mitochondrial (C1QBP).